A 529-amino-acid polypeptide reads, in one-letter code: GTPase Obg (529 aa).

The region spanning 2–159 (ASFVDRVVLH…SDIVLELKSI (158 aa)) is the Obg domain. Positions 160-343 (ADIALVGFPS…LGFAMAEIVK (184 aa)) constitute an OBG-type G domain. Residues 166 to 173 (GFPSAGKS), 191 to 195 (FTTLI), 212 to 215 (DVPG), 295 to 298 (NKVD), and 324 to 326 (SAT) contribute to the GTP site. Mg(2+) is bound by residues Ser173 and Thr193. In terms of domain architecture, OCT spans 363–447 (PRAVNEAGFK…DDGVVFDWEP (85 aa)). Over residues 466-502 (FADIGDRPTRGQKRDEQQERRDAKAAARAELEAERKA) the composition is skewed to basic and acidic residues. Residues 466-529 (FADIGDRPTR…ESGLTTENEE (64 aa)) form a disordered region.

The protein belongs to the TRAFAC class OBG-HflX-like GTPase superfamily. OBG GTPase family. As to quaternary structure, monomer. It depends on Mg(2+) as a cofactor.

It is found in the cytoplasm. An essential GTPase which binds GTP, GDP and possibly (p)ppGpp with moderate affinity, with high nucleotide exchange rates and a fairly low GTP hydrolysis rate. Plays a role in control of the cell cycle, stress response, ribosome biogenesis and in those bacteria that undergo differentiation, in morphogenesis control. The protein is GTPase Obg of Arthrobacter sp. (strain FB24).